The sequence spans 309 residues: Hydroxyacylglutathione hydrolase, mitochondrial (309 aa).

The N-terminal 24 residues, M1–G24, are a transit peptide targeting the mitochondrion. K90 is modified (N6-acetyllysine). Residues H103, H105, D107, and H108 each coordinate Zn(2+). Position 117 is an N6-acetyllysine (K117). Positions 159 and 183 each coordinate Zn(2+). Substrate-binding positions include K192 to Y194 and H222 to Y224. H222 provides a ligand contact to Zn(2+). Residue K230 is modified to N6-acetyllysine; alternate. K230 bears the N6-succinyllysine; alternate mark. R298–K301 is a substrate binding site.

Belongs to the metallo-beta-lactamase superfamily. Glyoxalase II family. In terms of assembly, monomer. It depends on Zn(2+) as a cofactor. In terms of tissue distribution, strongly expressed in testis, skeletal muscle and heart. Weakly expressed in placenta, pancreas, spleen and peripheral blood leukocytes.

It is found in the mitochondrion matrix. The protein resides in the cytoplasm. It catalyses the reaction an S-(2-hydroxyacyl)glutathione + H2O = a 2-hydroxy carboxylate + glutathione + H(+). The catalysed reaction is (R)-S-lactoylglutathione + H2O = (R)-lactate + glutathione + H(+). Its pathway is secondary metabolite metabolism; methylglyoxal degradation; (R)-lactate from methylglyoxal: step 2/2. In terms of biological role, thiolesterase that catalyzes the hydrolysis of S-D-lactoyl-glutathione to form glutathione and D-lactic acid. This Rattus norvegicus (Rat) protein is Hydroxyacylglutathione hydrolase, mitochondrial (Hagh).